The following is a 354-amino-acid chain: Photosystem II D2 protein (354 aa).

An N-acetylthreonine modification is found at T2. T2 is subject to Phosphothreonine. The helical transmembrane segment at 42-62 (CAYFALGGFFTGNTFVTSWYT) threads the bilayer. Residue H119 participates in chlorophyll a binding. Residues 126–142 (GFMLRQFEIARAVKIRP) form a helical membrane-spanning segment. Q131 and N144 together coordinate pheophytin a. Residues 154–167 (VFVSVFLIYPLGQQ) traverse the membrane as a helical segment. H199 contributes to the chlorophyll a binding site. Residues 209-229 (AALLCAIHGATVENTLFEDGD) traverse the membrane as a helical segment. The a plastoquinone site is built by H216 and F263. Fe cation is bound at residue H216. H270 contributes to the Fe cation binding site. A helical membrane pass occupies residues 280–296 (GLWMSAIGVVGLALNLR).

The protein belongs to the reaction center PufL/M/PsbA/D family. PSII is composed of 1 copy each of membrane proteins PsbA, PsbB, PsbC, PsbD, PsbE, PsbF, PsbH, PsbI, PsbJ, PsbK, PsbL, PsbM, PsbT, PsbX, PsbY, PsbZ, Psb30/Ycf12, at least 3 peripheral proteins of the oxygen-evolving complex and a large number of cofactors. It forms dimeric complexes. The cofactor is The D1/D2 heterodimer binds P680, chlorophylls that are the primary electron donor of PSII, and subsequent electron acceptors. It shares a non-heme iron and each subunit binds pheophytin, quinone, additional chlorophylls, carotenoids and lipids. There is also a Cl(-1) ion associated with D1 and D2, which is required for oxygen evolution. The PSII complex binds additional chlorophylls, carotenoids and specific lipids..

It is found in the plastid. The protein resides in the chloroplast thylakoid membrane. The catalysed reaction is 2 a plastoquinone + 4 hnu + 2 H2O = 2 a plastoquinol + O2. In terms of biological role, photosystem II (PSII) is a light-driven water:plastoquinone oxidoreductase that uses light energy to abstract electrons from H(2)O, generating O(2) and a proton gradient subsequently used for ATP formation. It consists of a core antenna complex that captures photons, and an electron transfer chain that converts photonic excitation into a charge separation. The D1/D2 (PsbA/PsbD) reaction center heterodimer binds P680, the primary electron donor of PSII as well as several subsequent electron acceptors. D2 is needed for assembly of a stable PSII complex. This is Photosystem II D2 protein from Mesostigma viride (Green alga).